The primary structure comprises 335 residues: Beta-ketoacyl-[acyl-carrier-protein] synthase III (335 aa).

Catalysis depends on residues cysteine 118 and histidine 259. The tract at residues 260 to 264 (QANER) is ACP-binding. Asparagine 289 is a catalytic residue.

It belongs to the thiolase-like superfamily. FabH family. In terms of assembly, homodimer.

The protein localises to the cytoplasm. It catalyses the reaction malonyl-[ACP] + acetyl-CoA + H(+) = 3-oxobutanoyl-[ACP] + CO2 + CoA. The protein operates within lipid metabolism; fatty acid biosynthesis. Catalyzes the condensation reaction of fatty acid synthesis by the addition to an acyl acceptor of two carbons from malonyl-ACP. Catalyzes the first condensation reaction which initiates fatty acid synthesis and may therefore play a role in governing the total rate of fatty acid production. Possesses both acetoacetyl-ACP synthase and acetyl transacylase activities. Its substrate specificity determines the biosynthesis of branched-chain and/or straight-chain of fatty acids. The sequence is that of Beta-ketoacyl-[acyl-carrier-protein] synthase III from Chlamydia caviae (strain ATCC VR-813 / DSM 19441 / 03DC25 / GPIC) (Chlamydophila caviae).